Reading from the N-terminus, the 334-residue chain is Ornithine carbamoyltransferase (334 aa).

Carbamoyl phosphate-binding positions include Ser57–Thr60, Gln84, Arg108, and His135–Gln138. Residues Asn169, Asp233, and Ser237–Met238 contribute to the L-ornithine site. Carbamoyl phosphate contacts are provided by residues Cys275–Leu276 and Arg320.

Belongs to the aspartate/ornithine carbamoyltransferase superfamily. OTCase family.

Its subcellular location is the cytoplasm. It carries out the reaction carbamoyl phosphate + L-ornithine = L-citrulline + phosphate + H(+). Its pathway is amino-acid biosynthesis; L-arginine biosynthesis; L-arginine from L-ornithine and carbamoyl phosphate: step 1/3. Reversibly catalyzes the transfer of the carbamoyl group from carbamoyl phosphate (CP) to the N(epsilon) atom of ornithine (ORN) to produce L-citrulline. This Vibrio cholerae serotype O1 (strain ATCC 39315 / El Tor Inaba N16961) protein is Ornithine carbamoyltransferase.